The following is a 1196-amino-acid chain: Major DNA-binding protein (1196 aa).

A zinc finger spans residues 499–512 (CNLCTFDTRHACVH). Short sequence motifs (required for filament formation) lie at residues 843–844 (FW) and 1142–1144 (FNF). The disordered stretch occupies residues 1158 to 1196 (GGPGAPGPAFAGRKRAFHGDDPFGEGPPDKKGDLTLDML). A required for nuclear localization region spans residues 1170–1196 (RKRAFHGDDPFGEGPPDKKGDLTLDML). The segment covering 1174 to 1196 (FHGDDPFGEGPPDKKGDLTLDML) has biased composition (basic and acidic residues).

The protein belongs to the herpesviridae major DNA-binding protein family. As to quaternary structure, homooligomers. Forms double-helical filaments necessary for the formation of replication compartments within the host nucleus. Interacts with the origin-binding protein. Interacts with the helicase primase complex; this interaction stimulates primer synthesis activity of the helicase-primase complex. Interacts with the DNA polymerase. Interacts with the alkaline exonuclease; this interaction increases its nuclease processivity.

The protein localises to the host nucleus. Its function is as follows. Plays several crucial roles in viral infection. Participates in the opening of the viral DNA origin to initiate replication by interacting with the origin-binding protein. May disrupt loops, hairpins and other secondary structures present on ssDNA to reduce and eliminate pausing of viral DNA polymerase at specific sites during elongation. Promotes viral DNA recombination by performing strand-transfer, characterized by the ability to transfer a DNA strand from a linear duplex to a complementary single-stranded DNA circle. Can also catalyze the renaturation of complementary single strands. Additionally, reorganizes the host cell nucleus, leading to the formation of prereplicative sites and replication compartments. This process is driven by the protein which can form double-helical filaments in the absence of DNA. The polypeptide is Major DNA-binding protein (Homo sapiens (Human)).